Reading from the N-terminus, the 1789-residue chain is Protein TIC 214 (1789 aa).

A run of 6 helical transmembrane segments spans residues 19–39 (IINSVVVVGLYYGFLTTFSIG), 68–88 (FIAGQLMMFISIYYAPLHLAL), 91–111 (PHTITVLALPYLLFHFFWNNH), 133–153 (VFLNNLIFQLFNHFILPSSML), 176–196 (VGWLIGHILFMKWVGLVLVWI), and 227–247 (IFSILLFITCVYYLGRIPSPI).

This sequence belongs to the TIC214 family. In terms of assembly, part of the Tic complex.

The protein localises to the plastid. It is found in the chloroplast inner membrane. Its function is as follows. Involved in protein precursor import into chloroplasts. May be part of an intermediate translocation complex acting as a protein-conducting channel at the inner envelope. This chain is Protein TIC 214, found in Capsella bursa-pastoris (Shepherd's purse).